The sequence spans 328 residues: tRNA dimethylallyltransferase (328 aa).

Position 23–30 (23–30) interacts with ATP; it reads GPTASGKS. A substrate-binding site is contributed by 25–30; sequence TASGKS. Positions 48 to 51 are interaction with substrate tRNA; the sequence is DSMQ.

The protein belongs to the IPP transferase family. Monomer. Requires Mg(2+) as cofactor.

The enzyme catalyses adenosine(37) in tRNA + dimethylallyl diphosphate = N(6)-dimethylallyladenosine(37) in tRNA + diphosphate. Its function is as follows. Catalyzes the transfer of a dimethylallyl group onto the adenine at position 37 in tRNAs that read codons beginning with uridine, leading to the formation of N6-(dimethylallyl)adenosine (i(6)A). The chain is tRNA dimethylallyltransferase from Rhodopseudomonas palustris (strain BisA53).